Reading from the N-terminus, the 467-residue chain is Indoleacetamide hydrolase (467 aa).

Catalysis depends on charge relay system residues lysine 74 and serine 149. Serine 173 serves as the catalytic Acyl-ester intermediate.

Belongs to the amidase family.

It functions in the pathway plant hormone metabolism; auxin biosynthesis. Functionally, hydrolyzes indole-3-acetamide (IAM) into indole-3-acetic acid (IAA). This chain is Indoleacetamide hydrolase (tms2), found in Rhizobium radiobacter (Agrobacterium tumefaciens).